We begin with the raw amino-acid sequence, 215 residues long: Cytochrome b6 (215 aa).

Residues 32 to 52 (IFYCLGGITLTCFLVQVATGF) form a helical membrane-spanning segment. Residue C35 participates in heme c binding. The heme b site is built by H86 and H100. The next 3 membrane-spanning stretches (helical) occupy residues 90–110 (ASMM…TGGF), 116–136 (LTWV…VTGY), and 186–206 (LHTF…FPMI). Heme b is bound by residues H187 and H202.

Belongs to the cytochrome b family. PetB subfamily. The 4 large subunits of the cytochrome b6-f complex are cytochrome b6, subunit IV (17 kDa polypeptide, PetD), cytochrome f and the Rieske protein, while the 4 small subunits are PetG, PetL, PetM and PetN. The complex functions as a dimer. It depends on heme b as a cofactor. Heme c serves as cofactor.

It localises to the plastid. Its subcellular location is the chloroplast thylakoid membrane. In terms of biological role, component of the cytochrome b6-f complex, which mediates electron transfer between photosystem II (PSII) and photosystem I (PSI), cyclic electron flow around PSI, and state transitions. The polypeptide is Cytochrome b6 (Liriodendron tulipifera (Tuliptree)).